The chain runs to 1411 residues: ATP-dependent permease PDR11 (1411 aa).

Residues 2–388 (SLSKYFNPIP…IGDRNYLISQ (387 aa)) lie on the Cytoplasmic side of the membrane. The 243-residue stretch at 31 to 273 (VQNDEESASE…FHDTLQIKKN (243 aa)) folds into the ABC transporter 1 domain. The chain crosses the membrane as a helical span at residues 389–409 (FVSVVVQSLVIGSLFYNIPLT). Over 410–418 (TIGSFSRGS) the chain is Extracellular. The helical transmembrane segment at 419-439 (LTFFSILFFTFLSLADMPASF) threads the bilayer. The Cytoplasmic segment spans residues 440 to 471 (QRQPVVRKHVQLHFYYNWVETLATNFFDCCSK). The helical transmembrane segment at 472–492 (FILVVIFTIILYFLAHLQYNA) threads the bilayer. At 493–494 (AR) the chain is on the extracellular side. A helical transmembrane segment spans residues 495–515 (FFIFLLFLSVYNFCMVSLFAL). Residues 516–524 (TALIAPTLS) are Cytoplasmic-facing. A helical transmembrane segment spans residues 525 to 545 (MANLLAGILLLAIAMYASYVI). At 546-636 (YMKDMHPWFI…YTYHHVWRNF (91 aa)) the chain is on the extracellular side. A glycan (N-linked (GlcNAc...) asparagine) is linked at N595. A helical transmembrane segment spans residues 637-657 (GIIIGFLCFFLFCSLLAAEYI). Topologically, residues 658–1090 (TPLFTRENLL…QYICTKRDMT (433 aa)) are cytoplasmic. Residues 751–979 (ISWKNINYTI…FVAHDRRLTF (229 aa)) form the ABC transporter 2 domain. 782 to 789 (GESGAGKT) lines the ATP pocket. A helical membrane pass occupies residues 1091 to 1111 (YVFAKYALNAGAGLFIGFSFW). At 1112 to 1117 (RTKHNI) the chain is on the extracellular side. Residues 1118-1138 (NGLQDAIFLCFMMLCVSSPLI) form a helical membrane-spanning segment. Residues 1139–1175 (NQVQDKALQSKEVYIAREARSNTYHWTVLLIAQTIVE) lie on the Cytoplasmic side of the membrane. The chain crosses the membrane as a helical span at residues 1176 to 1196 (LPLAISSSTLFFLCCYFCCGF). Topologically, residues 1197–1204 (ETSARVAG) are extracellular. Residues 1205-1225 (VFYLNYILFSMYYLSFGLWLL) traverse the membrane as a helical segment. The Cytoplasmic segment spans residues 1226–1230 (YSAPD). Residues 1231 to 1251 (LQTAAVFVAFLYSFTASFCGV) traverse the membrane as a helical segment. Residues 1252–1355 (MQPYSLFPRF…NMSYHHRWRN (104 aa)) are Extracellular-facing. 3 N-linked (GlcNAc...) asparagine glycosylation sites follow: N1289, N1324, and N1346. A helical transmembrane segment spans residues 1356 to 1376 (FGFEWVFVCFNIAAMFVGFYL). Residues 1377–1411 (TYIKKIWPSVIDGIKKCIPSMRRSKTSHNPNEQSV) lie on the Cytoplasmic side of the membrane.

This sequence belongs to the ABC transporter superfamily. ABCG family. PDR (TC 3.A.1.205) subfamily.

It is found in the membrane. Its function is as follows. Transporter involved in the uptake of sterol. The protein is ATP-dependent permease PDR11 (PDR11) of Saccharomyces cerevisiae (strain ATCC 204508 / S288c) (Baker's yeast).